The chain runs to 366 residues: tRNA/tmRNA (uracil-C(5))-methyltransferase (366 aa).

S-adenosyl-L-methionine is bound by residues glutamine 190, tyrosine 218, asparagine 223, glutamate 239, and aspartate 299. Catalysis depends on cysteine 324, which acts as the Nucleophile. Catalysis depends on glutamate 358, which acts as the Proton acceptor.

It belongs to the class I-like SAM-binding methyltransferase superfamily. RNA M5U methyltransferase family. TrmA subfamily.

It catalyses the reaction uridine(54) in tRNA + S-adenosyl-L-methionine = 5-methyluridine(54) in tRNA + S-adenosyl-L-homocysteine + H(+). The enzyme catalyses uridine(341) in tmRNA + S-adenosyl-L-methionine = 5-methyluridine(341) in tmRNA + S-adenosyl-L-homocysteine + H(+). Its function is as follows. Dual-specificity methyltransferase that catalyzes the formation of 5-methyluridine at position 54 (m5U54) in all tRNAs, and that of position 341 (m5U341) in tmRNA (transfer-mRNA). The chain is tRNA/tmRNA (uracil-C(5))-methyltransferase from Shigella dysenteriae serotype 1 (strain Sd197).